Here is a 78-residue protein sequence, read N- to C-terminus: DNA-directed RNA polymerase subunit Rpo5 (78 aa).

The protein belongs to the archaeal Rpo5/eukaryotic RPB5 RNA polymerase subunit family. In terms of assembly, part of the RNA polymerase complex.

It is found in the cytoplasm. The catalysed reaction is RNA(n) + a ribonucleoside 5'-triphosphate = RNA(n+1) + diphosphate. Its function is as follows. DNA-dependent RNA polymerase (RNAP) catalyzes the transcription of DNA into RNA using the four ribonucleoside triphosphates as substrates. The sequence is that of DNA-directed RNA polymerase subunit Rpo5 from Methanococcoides burtonii (strain DSM 6242 / NBRC 107633 / OCM 468 / ACE-M).